Here is a 396-residue protein sequence, read N- to C-terminus: Methionine import ATP-binding protein MetN 2 (396 aa).

In terms of domain architecture, ABC transporter spans 41–280; the sequence is VSFELVGKVF…PRHGATRALL (240 aa). 77–84 is a binding site for ATP; it reads GRSGAGKS.

This sequence belongs to the ABC transporter superfamily. Methionine importer (TC 3.A.1.24) family. In terms of assembly, the complex is composed of two ATP-binding proteins (MetN), two transmembrane proteins (MetI) and a solute-binding protein (MetQ).

The protein resides in the cell inner membrane. The enzyme catalyses L-methionine(out) + ATP + H2O = L-methionine(in) + ADP + phosphate + H(+). It carries out the reaction D-methionine(out) + ATP + H2O = D-methionine(in) + ADP + phosphate + H(+). Functionally, part of the ABC transporter complex MetNIQ involved in methionine import. Responsible for energy coupling to the transport system. The polypeptide is Methionine import ATP-binding protein MetN 2 (Burkholderia mallei (strain ATCC 23344)).